A 105-amino-acid chain; its full sequence is Putative membrane protein insertion efficiency factor (105 aa).

The protein belongs to the UPF0161 family.

It localises to the cell membrane. In terms of biological role, could be involved in insertion of integral membrane proteins into the membrane. This Bifidobacterium longum subsp. infantis (strain ATCC 15697 / DSM 20088 / JCM 1222 / NCTC 11817 / S12) protein is Putative membrane protein insertion efficiency factor.